An 816-amino-acid chain; its full sequence is Coiled-coil and C2 domain-containing protein 1-like (816 aa).

Residues 1 to 11 (MFSRKKPEPAK) are compositionally biased toward basic and acidic residues. 3 disordered regions span residues 1 to 135 (MFSR…TFLP), 157 to 176 (ANAK…RGLK), and 186 to 269 (AAGK…RQTD). Positions 25-47 (IPDDFDPSAGYGEDDGGDSDLEA) are enriched in acidic residues. Residues 73–85 (DLDKMIADSLRDV) show a composition bias toward basic and acidic residues. Residues 86-100 (SDDDDDDNLESDPDL) are compositionally biased toward acidic residues. Low complexity predominate over residues 122 to 131 (PPAASEEPVQ). The tract at residues 145–200 (IKQRLEMYKQAEANAKTAGDSGKARRFGRGLKTLKDLHRQAAAGKSINVDDIPPEV) is DM14 1. Residues 220 to 243 (PSTPASPPPVPSRAAPDPPTPGTP) show a composition bias toward pro residues. 2 DM14 regions span residues 265 to 317 (SRQT…MPPP) and 365 to 419 (LQQR…LPVP). The stretch at 355 to 382 (LAAATNMLEALQQRLEKYQSVEAAAKAE) forms a coiled coil. The tract at residues 418 to 492 (VPPGFGPLPT…TRTSGNQQKN (75 aa)) is disordered. Positions 424–433 (PLPTADAAPV) are enriched in low complexity. Residues 434–449 (APTPSLPTSPTSPPPT) show a composition bias toward pro residues. Residues 450–471 (ASTSAGGTPSSSSATTPTAPRK) are compositionally biased toward low complexity. Residues 483–492 (TRTSGNQQKN) are compositionally biased toward polar residues. Positions 502-556 (LLERQKEFKLAAIEAKKAGEIDQAKEYLKIFKGFDSLLNAASSGLPVDLSTLPVP) are DM14 4. Positions 637-776 (RKNEPLPKFH…ETKCEIHDTY (140 aa)) constitute a C2 domain.

This sequence belongs to the CC2D1 family. As to quaternary structure, interacts (via DM14 domains 1 and 3) with shrb; the interaction is direct and blocks access to the surface involved in shrb polymerization. This interaction may be required for the ESCRT-III complex role in multivesicular body formation.

The protein localises to the cytoplasm. It localises to the cytosol. Its subcellular location is the apicolateral cell membrane. It is found in the cell cortex. The protein resides in the endosome. Functionally, phosphatidyl inositol monophosphate binding protein involved in endosomal protein sorting through regulation of the endosomal sorting required for transport (ESCRT) pathway. Required for full activity of the ESCRT-III complex core component shrb/shrub, probably by preventing its inappropriate polymerisation. Required, but not essential, for the efficient generation of intraluminal vesicles (ILVs) in multivesicular bodies (MVBs). Involved in a late stage of the endosomal pathway targeting transmembrane proteins of the plasma membrane for lysosomal degradation. Plays a critical role in regulation of multiple signal transduction pathways, including the Notch and BMP/decapentaplegic (dpp) signaling pathways, through targeting of membrane bound receptors to multivesicular bodies, isolating them from the cytoplasm and targeting them for lysosomal degradation. Involved in targeting N/Notch for endosomal degradation, negatively regulating the Notch signaling pathway. Regulates Notch signaling in imaginal disk cells and follicle cells during oogenesis and multiple developmental processes, including development of wings, veins, legs, eyes and bristles. Restricts the activity of Notch to the dorsoventral (D/V) boundary of the wing imaginal disk. In external sensory organ development regulates Notch signaling during asymmetric cell division and differentiation of sensory organ precursor cells. May be involved in regulation of apoptosis and cell growth independent of Notch signaling. Involved in targeting tkv for endosomal degradation, negatively regulating the BMP/decapentaplegic (dpp) signaling pathway. Regulates the BMP/dpp signaling pathway in follicle cells during oogenesis, but not in imaginal disk cells during wing development. May be involved in differentiation or morphogenesis of peripodial epithelial cells in the developing imaginal disk. Involved in abscission of germline cells during oogenesis. The sequence is that of Coiled-coil and C2 domain-containing protein 1-like from Drosophila melanogaster (Fruit fly).